The primary structure comprises 302 residues: Sulfate adenylyltransferase subunit 2 (302 aa).

This sequence belongs to the PAPS reductase family. CysD subfamily. Heterodimer composed of CysD, the smaller subunit, and CysN.

The catalysed reaction is sulfate + ATP + H(+) = adenosine 5'-phosphosulfate + diphosphate. It participates in sulfur metabolism; hydrogen sulfide biosynthesis; sulfite from sulfate: step 1/3. Its function is as follows. With CysN forms the ATP sulfurylase (ATPS) that catalyzes the adenylation of sulfate producing adenosine 5'-phosphosulfate (APS) and diphosphate, the first enzymatic step in sulfur assimilation pathway. APS synthesis involves the formation of a high-energy phosphoric-sulfuric acid anhydride bond driven by GTP hydrolysis by CysN coupled to ATP hydrolysis by CysD. The protein is Sulfate adenylyltransferase subunit 2 of Buchnera aphidicola subsp. Acyrthosiphon pisum (strain 5A).